A 275-amino-acid polypeptide reads, in one-letter code: NH(3)-dependent NAD(+) synthetase (275 aa).

46 to 53 (GISGGQDS) contacts ATP. A Mg(2+)-binding site is contributed by Asp52. Deamido-NAD(+) is bound at residue Arg140. Thr160 is an ATP binding site. Mg(2+) is bound at residue Glu165. Lys173 and Asp180 together coordinate deamido-NAD(+). Residues Lys189 and Thr211 each coordinate ATP. 260–261 (HK) serves as a coordination point for deamido-NAD(+).

Belongs to the NAD synthetase family. As to quaternary structure, homodimer.

The enzyme catalyses deamido-NAD(+) + NH4(+) + ATP = AMP + diphosphate + NAD(+) + H(+). Its pathway is cofactor biosynthesis; NAD(+) biosynthesis; NAD(+) from deamido-NAD(+) (ammonia route): step 1/1. Its function is as follows. Catalyzes the ATP-dependent amidation of deamido-NAD to form NAD. Uses ammonia as a nitrogen source. The polypeptide is NH(3)-dependent NAD(+) synthetase (Cronobacter sakazakii (strain ATCC BAA-894) (Enterobacter sakazakii)).